The primary structure comprises 116 residues: Large ribosomal subunit protein bL19 (116 aa).

The protein belongs to the bacterial ribosomal protein bL19 family.

Its function is as follows. This protein is located at the 30S-50S ribosomal subunit interface and may play a role in the structure and function of the aminoacyl-tRNA binding site. The protein is Large ribosomal subunit protein bL19 of Staphylococcus aureus (strain USA300).